The primary structure comprises 873 residues: Alanine--tRNA ligase (873 aa).

His-563, His-567, Cys-665, and His-669 together coordinate Zn(2+).

The protein belongs to the class-II aminoacyl-tRNA synthetase family. Zn(2+) serves as cofactor.

It localises to the cytoplasm. The enzyme catalyses tRNA(Ala) + L-alanine + ATP = L-alanyl-tRNA(Ala) + AMP + diphosphate. Functionally, catalyzes the attachment of alanine to tRNA(Ala) in a two-step reaction: alanine is first activated by ATP to form Ala-AMP and then transferred to the acceptor end of tRNA(Ala). Also edits incorrectly charged Ser-tRNA(Ala) and Gly-tRNA(Ala) via its editing domain. The chain is Alanine--tRNA ligase from Parabacteroides distasonis (strain ATCC 8503 / DSM 20701 / CIP 104284 / JCM 5825 / NCTC 11152).